Here is a 1441-residue protein sequence, read N- to C-terminus: MALDIDTKNSSSAATGDANTVKANNNSSAASTGNKKTENLVNGNNNSAADGPAAKKKGKKNRNKSPPIATDAETTEAATTTAVTNGHEGEALVNGDAVAPDANANVAANDESESAEQQAAENAASSGELESEDVDLDALHDVGITVNISSPGADIISVQLSSMELVQEIHQLLMDREETCHRTCFSLQLGNNTLDNFAELKTVENLEQGSTIKVVEDPYTMREARIHVRHVRDLLKNLDPTDAYNGIDCTSLTYLNTITQGDLLDKKKTRPDSVDCTPPEYVTPGVKEPPLLPLHPNIKNAKGPQALKVLTTSAWNPPPGPRKLHGDLMYLYVVTMEEKRFHISACSKGFFINQSTDENFNPKPDNPSHLSHSLIDLLSTISPIFRRAFQTIQKRRTLRHAFERVATPYQVYQWASPQLEHTVDAIRAEDAFSSKLGYEEHIPGQTRDWNEELQTTRELPRKTLPERLMRERAIFKVHGDFVTAATRGAMAVIDGNVLAINPGEDSKMQMFIWNNIFFSLGFDVRDHYKELGGDHAAFVAPRYDLHGVRVYNAVDVEGLYTLGTVVIDYRGYRVTAQSIIPGILEREQEQSVVYGSIDFGKTVLSHPKYLELLRQAGKHLKILPHSVLNERDEPVELCSSVECKGIIGNDGRHYILDLLRTFPPDVNFLKLQDVKLSKELTEMGFPIEHRHKLCCLRQELLEAFIEDRYVSFIRIAAVHLQQLNAKKQDEAKEGTKEPASETEKESPPKAITEKEEEESKDQPTVGETKSAEAMVNAIREAQSNMATSNEVQAAEVVKRACAAVGSLKEKEFDFRFNPDVFSPGIRHVDGEEGTSSSIVKQKRLVQDAAEFLVLKQIPTFIKEHLAHSSPPIDGQTLTESLHNNGINVRYLGKVIKMLSQMPRMEYLYRIANLELIVRATKHIYYTYMQGTEPLHLSAAISHFLNCLLTNGPVNPAISKEEIHKKRTNTKYNKHKSSKSSGSGSKQSGQTSNQNGTSTSPSSSTASGGTSSNVAIDWTLVTPRSLWQQIRKEAKAYWDWDLECDAIDIALTKYGISRISLLRGFCQKVGIQVLLREYNFESKHKPTFGDDDIVNVFPVVKHISPRSTDAYNFYTTGQSKIQQGLFKEGYELISEALNLLNNVFGAMHQENGSCLRMLARLSYLLGDAQDALAIQQRAVIMSERVNGIDHPSTILEYTHLSLYSFANGHVGMSLKLLYRARYLLVLICGEDHPEVALIDSNISLILHALGEYELSLRFIEHALKLNLKYFGAKAMHVAVSYHLMARTQSCMGDFRSALNNEKETYTIYKSQLGEKHEKTRDSAECLRLLTQQAVLLQRKMNDIYSNGKLTSDLPPIHITPPSMGSVLDMLNTINGILFVQISQNDIVKVRSEIEKHLKANGEESEVNDAIKSIVDASGNNNGETEALINGGEESTVTVTATS.

Disordered stretches follow at residues 1 to 79 (MALD…EAAT) and 106 to 131 (VAAN…ELES). The span at 8–22 (KNSSSAATGDANTVK) shows a compositional bias: polar residues. The span at 54–63 (AKKKGKKNRN) shows a compositional bias: basic residues. Composition is skewed to low complexity over residues 64–79 (KSPP…EAAT) and 106–126 (VAAN…AASS). Position 273 is a phosphoserine (serine 273). Residues 427-669 (RAEDAFSSKL…RTFPPDVNFL (243 aa)) enclose the Clu domain. The span at 726–753 (KKQDEAKEGTKEPASETEKESPPKAITE) shows a compositional bias: basic and acidic residues. 2 disordered regions span residues 726-769 (KKQD…GETK) and 961-1009 (EIHK…SGGT). A compositionally biased stretch (basic residues) spans 964 to 977 (KKRTNTKYNKHKSS). Low complexity predominate over residues 978–1009 (KSSGSGSKQSGQTSNQNGTSTSPSSSTASGGT). TPR repeat units lie at residues 1109-1142 (AYNF…LNNV), 1235-1268 (ALID…NLKY), and 1270-1303 (GAKA…EKET).

The protein belongs to the CLU family.

The protein localises to the cytoplasm. MRNA-binding protein involved in proper cytoplasmic distribution of mitochondria. In Drosophila willistoni (Fruit fly), this protein is Protein clueless.